We begin with the raw amino-acid sequence, 430 residues long: Glial fibrillary acidic protein (430 aa).

The segment at 1–69 (MERRRITSAR…KETRASERAE (69 aa)) is head. A Phosphothreonine; by AURKB and ROCK1 modification is found at Thr7. Residue Arg11 is modified to Omega-N-methylarginine. Phosphoserine; by AURKB and ROCK1 is present on Ser12. Arg20 is subject to Omega-N-methylarginine. Arg33 carries the citrulline modification. Residue Ser35 is modified to Phosphoserine; by AURKB and ROCK1. Thr40 is subject to Phosphothreonine. The region spanning 66-374 (ERAEMMELND…KLLEGEENRI (309 aa)) is the IF rod domain. The interval 70–101 (MMELNDRFASYIEKVRFLEQQNKALAAELNQL) is coil 1A. Residue Ser79 is modified to Phosphoserine. Positions 102-112 (RAKEPTKLADV) are linker 1. Residues Thr107 and Thr147 each carry the phosphothreonine modification. The tract at residues 113-211 (YQAELRELRL…EEEVRELREQ (99 aa)) is coil 1B. Residues 212 to 227 (LAQQQVHVEMDVAKPD) are linker 12. The interval 228 to 249 (LTAALREIRTQYEAVATSNMQE) is coil 2A. Residues 250 to 253 (TEEW) are linker 2. A coil 2B region spans residues 254–374 (YRSKFADLTD…KLLEGEENRI (121 aa)). Ser266 is modified (phosphoserine). Residue Arg267 is modified to Citrulline. Phosphoserine is present on Ser320. The segment at 375-430 (TIPVQTFSNLQIRETSLDTKSVSEGHLKRNIVVKTVEMRDGEVIKDSKQEHKDVVM) is tail. Phosphothreonine is present on Thr380. Residue Ser382 is modified to Phosphoserine. A citrulline mark is found at Arg403 and Arg413.

It belongs to the intermediate filament family. Interacts with SYNM. In terms of assembly, interacts with PSEN1 (via N-terminus). Post-translationally, phosphorylated by PKN1. As to expression, brain; isoform 2 expressed at 20-fold lower level than isoform 1.

The protein resides in the cytoplasm. GFAP, a class-III intermediate filament, is a cell-specific marker that, during the development of the central nervous system, distinguishes astrocytes from other glial cells. The sequence is that of Glial fibrillary acidic protein (Gfap) from Mus musculus (Mouse).